The following is a 146-amino-acid chain: Large ribosomal subunit protein uL15 (146 aa).

Positions 1–62 (MRLHELRPKT…GQMPLQERLP (62 aa)) are disordered. Residues 10 to 21 (TNYKKSRKRKGR) show a composition bias toward basic residues. Residues 42–52 (TGGGVRPGFEG) show a composition bias toward gly residues.

The protein belongs to the universal ribosomal protein uL15 family. Part of the 50S ribosomal subunit.

Binds to the 23S rRNA. The chain is Large ribosomal subunit protein uL15 from Natranaerobius thermophilus (strain ATCC BAA-1301 / DSM 18059 / JW/NM-WN-LF).